The primary structure comprises 274 residues: 4-diphosphocytidyl-2-C-methyl-D-erythritol kinase (274 aa).

K9 is a catalytic residue. Position 91-101 (91-101) interacts with ATP; the sequence is PAGAGLGGGSS. D133 is an active-site residue.

It belongs to the GHMP kinase family. IspE subfamily.

It carries out the reaction 4-CDP-2-C-methyl-D-erythritol + ATP = 4-CDP-2-C-methyl-D-erythritol 2-phosphate + ADP + H(+). It functions in the pathway isoprenoid biosynthesis; isopentenyl diphosphate biosynthesis via DXP pathway; isopentenyl diphosphate from 1-deoxy-D-xylulose 5-phosphate: step 3/6. In terms of biological role, catalyzes the phosphorylation of the position 2 hydroxy group of 4-diphosphocytidyl-2C-methyl-D-erythritol. In Persephonella marina (strain DSM 14350 / EX-H1), this protein is 4-diphosphocytidyl-2-C-methyl-D-erythritol kinase.